The sequence spans 120 residues: uncharacterized protein (120 aa).

The protein to phage T4 y06Q.

This is an uncharacterized protein from Escherichia coli (strain K12).